Here is a 460-residue protein sequence, read N- to C-terminus: Centrosomal protein CEP57L1 (460 aa).

S49 carries the post-translational modification Phosphoserine. 2 coiled-coil regions span residues N51 to K228 and I317 to H384. Polar residues predominate over residues K399 to D410. Residues K399–P423 are disordered.

The protein belongs to the translokin family.

The protein localises to the cytoplasm. The protein resides in the cytoskeleton. It localises to the microtubule organizing center. Its subcellular location is the centrosome. In terms of biological role, centrosomal protein which may be required for microtubule attachment to centrosomes. This Homo sapiens (Human) protein is Centrosomal protein CEP57L1 (CEP57L1).